Reading from the N-terminus, the 396-residue chain is Tryptophan synthase beta chain (396 aa).

N6-(pyridoxal phosphate)lysine is present on lysine 88.

It belongs to the TrpB family. In terms of assembly, tetramer of two alpha and two beta chains. Requires pyridoxal 5'-phosphate as cofactor.

It catalyses the reaction (1S,2R)-1-C-(indol-3-yl)glycerol 3-phosphate + L-serine = D-glyceraldehyde 3-phosphate + L-tryptophan + H2O. The protein operates within amino-acid biosynthesis; L-tryptophan biosynthesis; L-tryptophan from chorismate: step 5/5. Its function is as follows. The beta subunit is responsible for the synthesis of L-tryptophan from indole and L-serine. This is Tryptophan synthase beta chain from Leptospira biflexa serovar Patoc (strain Patoc 1 / Ames).